The sequence spans 252 residues: Imidazole glycerol phosphate synthase subunit HisF (252 aa).

Residues aspartate 11 and aspartate 130 contribute to the active site.

It belongs to the HisA/HisF family. Heterodimer of HisH and HisF.

Its subcellular location is the cytoplasm. The catalysed reaction is 5-[(5-phospho-1-deoxy-D-ribulos-1-ylimino)methylamino]-1-(5-phospho-beta-D-ribosyl)imidazole-4-carboxamide + L-glutamine = D-erythro-1-(imidazol-4-yl)glycerol 3-phosphate + 5-amino-1-(5-phospho-beta-D-ribosyl)imidazole-4-carboxamide + L-glutamate + H(+). It participates in amino-acid biosynthesis; L-histidine biosynthesis; L-histidine from 5-phospho-alpha-D-ribose 1-diphosphate: step 5/9. Its function is as follows. IGPS catalyzes the conversion of PRFAR and glutamine to IGP, AICAR and glutamate. The HisF subunit catalyzes the cyclization activity that produces IGP and AICAR from PRFAR using the ammonia provided by the HisH subunit. This Streptococcus gordonii (strain Challis / ATCC 35105 / BCRC 15272 / CH1 / DL1 / V288) protein is Imidazole glycerol phosphate synthase subunit HisF.